The chain runs to 172 residues: MKRDRKEEIVQEVAEKINRSQGIYLTEFQGLSVAKMSELRREFRKVGVEYRVVKNTLIKQALKDLAGADKLAPGLKSTTAVAFGFDDPVAPAKVIRKFSKTNDALKFKMASIDGVVFGPDQLPLLSEMLTKTENIGRAAGLINGVVSSVPMVVNAVMRNLVCALDQIAKQKQ.

This sequence belongs to the universal ribosomal protein uL10 family. Part of the ribosomal stalk of the 50S ribosomal subunit. The N-terminus interacts with L11 and the large rRNA to form the base of the stalk. The C-terminus forms an elongated spine to which L12 dimers bind in a sequential fashion forming a multimeric L10(L12)X complex.

Its function is as follows. Forms part of the ribosomal stalk, playing a central role in the interaction of the ribosome with GTP-bound translation factors. The polypeptide is Large ribosomal subunit protein uL10 (Pelodictyon phaeoclathratiforme (strain DSM 5477 / BU-1)).